The chain runs to 233 residues: Large ribosomal subunit protein uL1 (233 aa).

This sequence belongs to the universal ribosomal protein uL1 family. Part of the 50S ribosomal subunit.

Functionally, binds directly to 23S rRNA. The L1 stalk is quite mobile in the ribosome, and is involved in E site tRNA release. Its function is as follows. Protein L1 is also a translational repressor protein, it controls the translation of the L11 operon by binding to its mRNA. The protein is Large ribosomal subunit protein uL1 of Vibrio vulnificus (strain CMCP6).